The sequence spans 286 residues: Energy-coupling factor transporter ATP-binding protein EcfA2 (286 aa).

Residues 3–246 (IQFNQVSYIY…KTQLLKWHIE (244 aa)) enclose the ABC transporter domain. Position 40–47 (40–47 (GQTGSGKS)) interacts with ATP.

Belongs to the ABC transporter superfamily. Energy-coupling factor EcfA family. As to quaternary structure, forms a stable energy-coupling factor (ECF) transporter complex composed of 2 membrane-embedded substrate-binding proteins (S component), 2 ATP-binding proteins (A component) and 2 transmembrane proteins (T component).

It localises to the cell membrane. Its function is as follows. ATP-binding (A) component of a common energy-coupling factor (ECF) ABC-transporter complex. Unlike classic ABC transporters this ECF transporter provides the energy necessary to transport a number of different substrates. In Staphylococcus epidermidis (strain ATCC 12228 / FDA PCI 1200), this protein is Energy-coupling factor transporter ATP-binding protein EcfA2.